Consider the following 183-residue polypeptide: MALVQSRTFPHLNTPLSPILSSLHAPSSLFIRREIRPVAAPFSSSTAGNLPFSPLTRPRKLLCPPPRGKFVREDYLVKKLSAQELQELVKGDRKVPLIVDFYATWCGPCILMAQELEMLAVEYESNAIIVKVDTDDEYEFARDMQVRGLPTLFFISPDPSKDAIRTEGLIPLQMMHDIIDNEM.

The transit peptide at M1–S81 directs the protein to the chloroplast. In terms of domain architecture, Thioredoxin spans A82 to M183. Residues C106 and C109 each act as nucleophile in the active site. Cysteines 106 and 109 form a disulfide.

This sequence belongs to the thioredoxin family. Plant CITRX-type subfamily. Interacts with FLN1 and FLN2. Interacts with MRL7.

It localises to the plastid. It is found in the chloroplast. Thiol-disulfide oxidoreductase that plays a role in proper chloroplast development, most likely through regulating plastid-encoded polymerase (PEP) dependent chloroplast transcription. Acts as a component of the transcriptionally active plastid chromosome that is required for plastid gene expression. The protein is Thioredoxin-like protein CITRX, chloroplastic of Arabidopsis thaliana (Mouse-ear cress).